Here is a 92-residue protein sequence, read N- to C-terminus: Sarcosine oxidase subunit delta (92 aa).

4 residues coordinate Zn(2+): C7, C10, H57, and C61.

The protein belongs to the SoxD family. In terms of assembly, heterotetramer composed of subunits alpha (SoxA), beta (SoxB), gamma (SoxG) and delta (SoxD).

It is found in the cytoplasm. It carries out the reaction sarcosine + (6S)-5,6,7,8-tetrahydrofolate + O2 = (6R)-5,10-methylene-5,6,7,8-tetrahydrofolate + glycine + H2O2. The enzyme catalyses sarcosine + O2 + H2O = formaldehyde + glycine + H2O2. In the presence of tetrahydrofolate, catalyzes the oxidative demethylation of sarcosine to yield glycine, 5,10-methylenetetrahydrofolate and hydrogen peroxide. In the absence of tetrahydrofolate, catalyzes the oxidative demethylation of sarcosine to yield glycine, formaldehyde and hydrogen peroxide. This is Sarcosine oxidase subunit delta (soxD) from Rhizobium meliloti (strain 1021) (Ensifer meliloti).